The primary structure comprises 115 residues: Large ribosomal subunit protein uL18 (115 aa).

The protein belongs to the universal ribosomal protein uL18 family. As to quaternary structure, part of the 50S ribosomal subunit; part of the 5S rRNA/L5/L18/L25 subcomplex. Contacts the 5S and 23S rRNAs.

Functionally, this is one of the proteins that bind and probably mediate the attachment of the 5S RNA into the large ribosomal subunit, where it forms part of the central protuberance. This Ruthia magnifica subsp. Calyptogena magnifica protein is Large ribosomal subunit protein uL18.